Reading from the N-terminus, the 483-residue chain is Zinc metalloproteinase/disintegrin (483 aa).

Positions 1-20 (MIQVLLVTLCLAAFPYQGNS) are cleaved as a signal peptide. Positions 21 to 191 (IILESGNVND…KASQLNLTPE (171 aa)) are excised as a propeptide. Residues 198 to 394 (RYIELVVVAD…HNPQCMLNEP (197 aa)) enclose the Peptidase M12B domain. The Ca(2+) site is built by Glu201 and Asp285. Intrachain disulfides connect Cys309-Cys389, Cys349-Cys373, and Cys351-Cys356. His334 provides a ligand contact to Zn(2+). Glu335 is a catalytic residue. Zn(2+)-binding residues include His338 and His344. 2 residues coordinate Ca(2+): Cys389 and Asn392. The propeptide occupies 395–414 (LRTDIVSTPVSGNELWETGE). A Disintegrin domain is found at 402 to 483 (TPVSGNELWE…AGCPRNPFHA (82 aa)). 4 cysteine pairs are disulfide-bonded: Cys425–Cys448, Cys439–Cys445, Cys444–Cys469, and Cys457–Cys476. The short motif at 461–463 (KGD) is the Cell attachment site; atypical (KGD) element.

This sequence belongs to the venom metalloproteinase (M12B) family. P-II subfamily. P-IIe sub-subfamily. In terms of assembly, heterodimer with piscivostatin-alpha; disulfide-linked (disintegrin). Requires Zn(2+) as cofactor. As to expression, expressed by the venom gland.

It is found in the secreted. Functionally, impairs hemostasis in the envenomed animal. Inhibits platelet aggregation induced by ADP. Acts by inhibiting fibrinogen interaction with platelet receptors GPIIb/GPIIIa (ITGA2B/ITGB3). Also inhibits platelet aggregate dissociation in human platelet-rich plasma. The protein is Zinc metalloproteinase/disintegrin of Agkistrodon piscivorus piscivorus (Eastern cottonmouth).